The sequence spans 288 residues: Intermediate transcription factor 3 small subunit (288 aa).

The protein belongs to the orthopoxvirus OPG134 family. Heterodimer of a 45 kDa (A23R) and a 32 kDa (A8R) subunit to form the virus intermediate transcription factor (VITF)-3.

In terms of biological role, acts with RNA polymerase to initiate transcription from intermediate gene promoters. In Homo sapiens (Human), this protein is Intermediate transcription factor 3 small subunit (OPG134).